Reading from the N-terminus, the 152-residue chain is Aspartate carbamoyltransferase regulatory chain (152 aa).

Residues C109, C114, C138, and C141 each contribute to the Zn(2+) site.

It belongs to the PyrI family. Contains catalytic and regulatory chains. It depends on Zn(2+) as a cofactor.

Its function is as follows. Involved in allosteric regulation of aspartate carbamoyltransferase. This is Aspartate carbamoyltransferase regulatory chain from Thermoplasma volcanium (strain ATCC 51530 / DSM 4299 / JCM 9571 / NBRC 15438 / GSS1).